A 131-amino-acid chain; its full sequence is Holo-[acyl-carrier-protein] synthase (131 aa).

Mg(2+) contacts are provided by D8 and E58.

The protein belongs to the P-Pant transferase superfamily. AcpS family. The cofactor is Mg(2+).

The protein resides in the cytoplasm. It carries out the reaction apo-[ACP] + CoA = holo-[ACP] + adenosine 3',5'-bisphosphate + H(+). Functionally, transfers the 4'-phosphopantetheine moiety from coenzyme A to a Ser of acyl-carrier-protein. This chain is Holo-[acyl-carrier-protein] synthase, found in Oenococcus oeni (strain ATCC BAA-331 / PSU-1).